The primary structure comprises 139 residues: MTEKKERIDVHAYLAEFDDIPGTRVFTAQRARKGYNLNQFAMSLMKAENRERFKADESAYLDEWNLTPAAKAAVLARDYNAMIDEGGNVYFLSKLFSTDGKSFQFAAGSMTGMTQEEYAQMMIDGGRSPAGVRSIKGGY.

In terms of assembly, composed of two subunits (alpha and beta) in a 1:1 ratio. Requires Fe(2+) as cofactor.

It catalyses the reaction 3,4-dihydroxybenzoate + O2 = 4-carboxy-2-hydroxy-cis,cis-muconate 6-semialdehyde + H(+). Its function is as follows. Responsible for the aromatic ring fission of protocatechuate. The protein is Protocatechuate 4,5-dioxygenase alpha chain (ligA) of Sphingobium sp. (strain NBRC 103272 / SYK-6).